A 261-amino-acid chain; its full sequence is Acetylglutamate kinase (261 aa).

Substrate is bound by residues 41-42 (GG), arginine 63, and asparagine 157.

The protein belongs to the acetylglutamate kinase family. ArgB subfamily.

It is found in the cytoplasm. The enzyme catalyses N-acetyl-L-glutamate + ATP = N-acetyl-L-glutamyl 5-phosphate + ADP. The protein operates within amino-acid biosynthesis; L-arginine biosynthesis; N(2)-acetyl-L-ornithine from L-glutamate: step 2/4. In terms of biological role, catalyzes the ATP-dependent phosphorylation of N-acetyl-L-glutamate. The sequence is that of Acetylglutamate kinase from Koribacter versatilis (strain Ellin345).